Here is a 240-residue protein sequence, read N- to C-terminus: tRNA1(Val) (adenine(37)-N6)-methyltransferase (240 aa).

The protein belongs to the methyltransferase superfamily. tRNA (adenine-N(6)-)-methyltransferase family.

The protein localises to the cytoplasm. The catalysed reaction is adenosine(37) in tRNA1(Val) + S-adenosyl-L-methionine = N(6)-methyladenosine(37) in tRNA1(Val) + S-adenosyl-L-homocysteine + H(+). Specifically methylates the adenine in position 37 of tRNA(1)(Val) (anticodon cmo5UAC). In Dyadobacter fermentans (strain ATCC 700827 / DSM 18053 / CIP 107007 / KCTC 52180 / NS114), this protein is tRNA1(Val) (adenine(37)-N6)-methyltransferase.